Consider the following 326-residue polypeptide: Flap endonuclease 1 (326 aa).

Positions Met1 to Arg100 are N-domain. Asp28, Asp82, Glu154, Glu156, Asp175, Asp177, and Asp225 together coordinate Mg(2+). Residues Arg118–Gly246 are I-domain. Positions Val318–Ala326 are interaction with PCNA.

It belongs to the XPG/RAD2 endonuclease family. FEN1 subfamily. In terms of assembly, interacts with PCNA. PCNA stimulates the nuclease activity without altering cleavage specificity. The cofactor is Mg(2+).

In terms of biological role, structure-specific nuclease with 5'-flap endonuclease and 5'-3' exonuclease activities involved in DNA replication and repair. During DNA replication, cleaves the 5'-overhanging flap structure that is generated by displacement synthesis when DNA polymerase encounters the 5'-end of a downstream Okazaki fragment. Binds the unpaired 3'-DNA end and kinks the DNA to facilitate 5' cleavage specificity. Cleaves one nucleotide into the double-stranded DNA from the junction in flap DNA, leaving a nick for ligation. Also involved in the base excision repair (BER) pathway. Acts as a genome stabilization factor that prevents flaps from equilibrating into structures that lead to duplications and deletions. Also possesses 5'-3' exonuclease activity on nicked or gapped double-stranded DNA. This Haloarcula marismortui (strain ATCC 43049 / DSM 3752 / JCM 8966 / VKM B-1809) (Halobacterium marismortui) protein is Flap endonuclease 1.